Here is a 304-residue protein sequence, read N- to C-terminus: MDVFQKVEKIGEGTYGVVYKARNKVTGQLVALKKIRLDLEAEGVPSTAVREISLLKELKHPNIIKLLDVVHREKKLYMVFEFLTQDLKRHMDSSPTSELPLPVVKSYLAQLLEGVSFCHSHRVIHRDLKPQNLLLDGLGAIKLADFGLARAFGVPLRTYTHEVVTLWYRAPEILLGSKFYSTAVDIWSIGCIFAEMVTGKALFPGDSEIDQLFRIFRTLGTPSEATWPGVSQMPDYQSSFPKWSRKGLEEIVPSLGPEGKDLLLRLLQYDPSQRISAKTALAHPYFSPGHSLAPQQCTAGRSSR.

One can recognise a Protein kinase domain in the interval 4-286 (FQKVEKIGEG…AKTALAHPYF (283 aa)). Residues 10–18 (IGEGTYGVV) and lysine 33 each bind ATP. Aspartate 127 acts as the Proton acceptor in catalysis.

It belongs to the protein kinase superfamily. CMGC Ser/Thr protein kinase family. CDC2/CDKX subfamily. As to quaternary structure, interacts with CABLES1 and ATF1. Binding to CCNC/cyclin-C promotes RB1 phosphorylation. Binds to CABLES2.

The catalysed reaction is L-seryl-[protein] + ATP = O-phospho-L-seryl-[protein] + ADP + H(+). The enzyme catalyses L-threonyl-[protein] + ATP = O-phospho-L-threonyl-[protein] + ADP + H(+). Its function is as follows. Serine/threonine-protein kinase that plays a critical role in the control of the eukaryotic cell cycle; involved in G0-G1 and G1-S cell cycle transitions. Interacts with CCNC/cyclin-C during interphase. Phosphorylates histone H1, ATF1, RB1 and CABLES1. ATF1 phosphorylation triggers ATF1 transactivation and transcriptional activities, and promotes cell proliferation and transformation. CDK3/cyclin-C mediated RB1 phosphorylation is required for G0-G1 transition. Promotes G1-S transition probably by contributing to the activation of E2F1, E2F2 and E2F3 in a RB1-independent manner. The sequence is that of Cyclin-dependent kinase 3 (Cdk3) from Mus musculus (Mouse).